A 100-amino-acid chain; its full sequence is Small ribosomal subunit protein uS14c (100 aa).

It belongs to the universal ribosomal protein uS14 family. In terms of assembly, part of the 30S ribosomal subunit.

The protein localises to the plastid. Binds 16S rRNA, required for the assembly of 30S particles. The chain is Small ribosomal subunit protein uS14c from Cuscuta exaltata (Tall dodder).